The chain runs to 293 residues: Acetylglutamate kinase (293 aa).

Residues Gly-68–Gly-69, Arg-90, and Asn-189 each bind substrate.

It belongs to the acetylglutamate kinase family. ArgB subfamily.

The protein localises to the cytoplasm. It catalyses the reaction N-acetyl-L-glutamate + ATP = N-acetyl-L-glutamyl 5-phosphate + ADP. The protein operates within amino-acid biosynthesis; L-arginine biosynthesis; N(2)-acetyl-L-ornithine from L-glutamate: step 2/4. Functionally, catalyzes the ATP-dependent phosphorylation of N-acetyl-L-glutamate. The sequence is that of Acetylglutamate kinase from Mycobacterium ulcerans (strain Agy99).